Here is a 302-residue protein sequence, read N- to C-terminus: Oxygen-dependent coproporphyrinogen-III oxidase (302 aa).

Serine 94 provides a ligand contact to substrate. A divalent metal cation contacts are provided by histidine 98 and histidine 108. Histidine 108 acts as the Proton donor in catalysis. Substrate is bound at residue 110–112 (NVR). Histidine 147 and histidine 177 together coordinate a divalent metal cation. The interval 242 to 277 (YVEFNLVFDRGTLFGLQSGGRTESILMSMPPVANWR) is important for dimerization. 260–262 (GGR) contacts substrate.

Belongs to the aerobic coproporphyrinogen-III oxidase family. In terms of assembly, homodimer. A divalent metal cation serves as cofactor.

It is found in the cytoplasm. It carries out the reaction coproporphyrinogen III + O2 + 2 H(+) = protoporphyrinogen IX + 2 CO2 + 2 H2O. The protein operates within porphyrin-containing compound metabolism; protoporphyrin-IX biosynthesis; protoporphyrinogen-IX from coproporphyrinogen-III (O2 route): step 1/1. Its function is as follows. Involved in the heme biosynthesis. Catalyzes the aerobic oxidative decarboxylation of propionate groups of rings A and B of coproporphyrinogen-III to yield the vinyl groups in protoporphyrinogen-IX. This Ralstonia nicotianae (strain ATCC BAA-1114 / GMI1000) (Ralstonia solanacearum) protein is Oxygen-dependent coproporphyrinogen-III oxidase.